We begin with the raw amino-acid sequence, 382 residues long: Flap endonuclease 1-B (382 aa).

Residues 1 to 104 (MGIHGLAKLI…GELAKRSERR (104 aa)) form an N-domain region. Residue aspartate 34 coordinates Mg(2+). DNA is bound by residues arginine 47 and arginine 70. Positions 86, 158, 160, 179, and 181 each coordinate Mg(2+). The I-domain stretch occupies residues 122–253 (NIEKFNKRLV…KRAIDLIRQH (132 aa)). Glutamate 158 serves as a coordination point for DNA. Positions 231 and 233 each coordinate DNA. Aspartate 233 contacts Mg(2+). The interaction with PCNA stretch occupies residues 336 to 344 (TQGRLDDFF). The interval 352 to 382 (STKRKEVESKGSTKKKSKTGGTPAGKFKRGK) is disordered.

It belongs to the XPG/RAD2 endonuclease family. FEN1 subfamily. Interacts with PCNA. Three molecules of fen1 bind to one PCNA trimer with each molecule binding to one PCNA monomer. PCNA stimulates the nuclease activity without altering cleavage specificity. It depends on Mg(2+) as a cofactor. In terms of processing, phosphorylated. Phosphorylation upon DNA damage induces relocalization to the nuclear plasma.

The protein resides in the nucleus. It localises to the nucleolus. It is found in the nucleoplasm. Its subcellular location is the mitochondrion. Functionally, structure-specific nuclease with 5'-flap endonuclease and 5'-3' exonuclease activities involved in DNA replication and repair. During DNA replication, cleaves the 5'-overhanging flap structure that is generated by displacement synthesis when DNA polymerase encounters the 5'-end of a downstream Okazaki fragment. It enters the flap from the 5'-end and then tracks to cleave the flap base, leaving a nick for ligation. Also involved in the long patch base excision repair (LP-BER) pathway, by cleaving within the apurinic/apyrimidinic (AP) site-terminated flap. Acts as a genome stabilization factor that prevents flaps from equilibrating into structures that lead to duplications and deletions. Also possesses 5'-3' exonuclease activity on nicked or gapped double-stranded DNA, and exhibits RNase H activity. Also involved in replication and repair of rDNA and in repairing mitochondrial DNA. The chain is Flap endonuclease 1-B (fen1-b) from Xenopus laevis (African clawed frog).